Consider the following 306-residue polypeptide: Leucine-rich repeat-containing protein 75B (306 aa).

The interval M1–A22 is disordered. Residues D12–A22 show a composition bias toward low complexity. LRR repeat units lie at residues L173–E186 and L198–L211.

The protein belongs to the LRRC75 family.

May suppress myogenic differentiation by modulating MYOG expression and Erk1/2 signaling. This chain is Leucine-rich repeat-containing protein 75B, found in Mus musculus (Mouse).